The sequence spans 394 residues: 8-amino-7-oxononanoate synthase (394 aa).

Residue Arg-21 coordinates substrate. 112-113 contacts pyridoxal 5'-phosphate; it reads GY. His-137 contributes to the substrate binding site. The pyridoxal 5'-phosphate site is built by Ser-183, His-211, and Thr-239. Lys-242 carries the N6-(pyridoxal phosphate)lysine modification. Substrate is bound at residue Thr-358.

Belongs to the class-II pyridoxal-phosphate-dependent aminotransferase family. BioF subfamily. As to quaternary structure, homodimer. It depends on pyridoxal 5'-phosphate as a cofactor.

It carries out the reaction 6-carboxyhexanoyl-[ACP] + L-alanine + H(+) = (8S)-8-amino-7-oxononanoate + holo-[ACP] + CO2. The protein operates within cofactor biosynthesis; biotin biosynthesis. Functionally, catalyzes the decarboxylative condensation of pimeloyl-[acyl-carrier protein] and L-alanine to produce 8-amino-7-oxononanoate (AON), [acyl-carrier protein], and carbon dioxide. The polypeptide is 8-amino-7-oxononanoate synthase (Burkholderia pseudomallei (strain 1710b)).